A 461-amino-acid polypeptide reads, in one-letter code: Proton extrusion protein PxcA (461 aa).

Transmembrane regions (helical) follow at residues 244–264 (FMLL…ALIV), 339–359 (LKNI…VFTG), 386–406 (IILF…EVLV), and 421–441 (FINM…KYWI).

It belongs to the CemA family.

It is found in the cell inner membrane. Its function is as follows. Required for H(+) efflux immediately after light irradiation to form a rapid H(+) concentration gradient across the thylakoid membranes. Together with PxcL, contributes to transient H(+) uptake following dark to light transition. This Thermosynechococcus vestitus (strain NIES-2133 / IAM M-273 / BP-1) protein is Proton extrusion protein PxcA.